The primary structure comprises 103 residues: MYAVFQSGGKQHRVSEGQTVRLEKLDIATGEAVEFDQVLMVANGEEIKIGVPFVDGGKIKAEVVAHGRGEKVKIVKFRRRKHYRKQAGHRQWFTDVKITGISA.

It belongs to the bacterial ribosomal protein bL21 family. Part of the 50S ribosomal subunit. Contacts protein L20.

Functionally, this protein binds to 23S rRNA in the presence of protein L20. The chain is Large ribosomal subunit protein bL21 from Pectobacterium carotovorum subsp. carotovorum (strain PC1).